A 615-amino-acid chain; its full sequence is Elongation factor 4 (615 aa).

Residues 14 to 200 (SKIRNFCIIA…KVAELIPAPT (187 aa)) enclose the tr-type G domain. GTP contacts are provided by residues 26-31 (DHGKST) and 147-150 (NKID).

Belongs to the TRAFAC class translation factor GTPase superfamily. Classic translation factor GTPase family. LepA subfamily.

The protein localises to the cell membrane. It catalyses the reaction GTP + H2O = GDP + phosphate + H(+). In terms of biological role, required for accurate and efficient protein synthesis under certain stress conditions. May act as a fidelity factor of the translation reaction, by catalyzing a one-codon backward translocation of tRNAs on improperly translocated ribosomes. Back-translocation proceeds from a post-translocation (POST) complex to a pre-translocation (PRE) complex, thus giving elongation factor G a second chance to translocate the tRNAs correctly. Binds to ribosomes in a GTP-dependent manner. The sequence is that of Elongation factor 4 from Corynebacterium aurimucosum (strain ATCC 700975 / DSM 44827 / CIP 107346 / CN-1) (Corynebacterium nigricans).